Here is a 922-residue protein sequence, read N- to C-terminus: Lysine-specific demethylase 7A (922 aa).

The PHD-type zinc-finger motif lies at 6-57 (PVYCVCRQPYDVSRFMIECDICKDWFHSSCVKVEEHQAADIDLYHCPNCEVL). The JmjC domain occupies 199–355 (FSDTKMADLV…MQLRCYEMEK (157 aa)). Threonine 248 serves as a coordination point for substrate. 2 residues coordinate Fe cation: histidine 251 and aspartate 253. Residue lysine 268 participates in substrate binding. Histidine 323 provides a ligand contact to Fe cation. Disordered stretches follow at residues 445–490 (EEEG…TKTP), 565–607 (RSLY…TQKP), 622–711 (GSSE…EQEA), 754–773 (GKEHLDSHSHKAANSDHHVK), and 872–902 (LHPTKRPASNPPPISNQATKGKRPKKGMATA). Basic residues predominate over residues 473 to 483 (HHSGRKARRLR). The segment covering 648 to 666 (ESESSGDDDDEEEEEEEER) has biased composition (acidic residues). Basic and acidic residues-rich tracts occupy residues 667-683 (QEPIRNLKEEHSGRRLP) and 691-701 (PDHDSPQKREC).

Belongs to the JHDM1 histone demethylase family. JHDM1D subfamily. Fe(2+) is required as a cofactor.

The protein resides in the nucleus. Its function is as follows. Histone demethylase required for brain development. Specifically demethylates dimethylated 'Lys-9' and 'Lys-27' (H3K9me2 and H3K27me2, respectively) of histone H3 and monomethylated histone H4 'Lys-20' residue (H4K20Me1), thereby playing a central role in histone code. The polypeptide is Lysine-specific demethylase 7A (kdm7a) (Xenopus tropicalis (Western clawed frog)).